The following is a 299-amino-acid chain: pH-regulated antigen PRA1 (299 aa).

Positions 1–15 (MNYLLFCLFFAFSVA) are cleaved as a signal peptide. N48, N89, N135, and N208 each carry an N-linked (GlcNAc...) asparagine glycan. Positions 253-299 (FEDSDSGSDSGASSTASSSHQHTDSNPSATTDANSHCHTHADGEVHC) are disordered. The segment covering 259–272 (GSDSGASSTASSSH) has biased composition (low complexity). Residues 278-288 (NPSATTDANSH) show a composition bias toward polar residues.

It belongs to the ZPS1 family. As to quaternary structure, component of a multiprotein complex of 250 kDa composed of at least HYR1, MP65, and PRA1. Interacts with host Integrin alpha-M/beta-2 heterodimer. Also binds human factor H (CFH), CFHR1, plasminogen (PLG), complement C3, and C4BPA. Interacts with ZRT101. Post-translationally, N- and O-glycosylated. The N- and 0-glycosidically linked carbohydrates represent 18 to 20 percent and 3 to 4 percent, respectively, of the molecular mass of PRA1. 0-linked sugar residues may be involved in the interaction with fibrinogen. Contributes highly to the carbohydrate component of the matrix. Treatment with tunicamycin impairs glycosylation.

Its subcellular location is the secreted. Functionally, cell surface protein involved in the host-parasite interaction during candidal infection. With MP65, represents a major component of the biofilm matrix. As a surface protein, binds the two human complement regulators CFH and CFHR1, as well as plasminogen PLG, mediates complement evasion and extra-cellular matrix interaction and/or degradation. As a released protein, enhances complement control in direct vicinity of the yeast and thus generates an additional protective layer which controls host complement attack, assisting the fungus in escaping host surveillance. Binds to host fluid-phase C3 and blocks cleavage of C3 to C3a and C3b, leading to inhibition of complement activation and protection from uptake of C.albicans by human macrophages. Also mediates human complement control and complement evasion through binding to C4BPA, another human complement inhibitor, as well as through binding to host integrin alpha-M/beta-2. Binds zinc from its environment and then reassociates with ZRT1 to acquire this essential metal. The protein is pH-regulated antigen PRA1 of Candida albicans (strain SC5314 / ATCC MYA-2876) (Yeast).